The following is a 402-amino-acid chain: Deoxyguanosinetriphosphate triphosphohydrolase-like protein (402 aa).

One can recognise an HD domain in the interval 73–217 (RLTHTIEVAQ…AAIADDIAYN (145 aa)).

This sequence belongs to the dGTPase family. Type 2 subfamily.

The polypeptide is Deoxyguanosinetriphosphate triphosphohydrolase-like protein (Brucella anthropi (strain ATCC 49188 / DSM 6882 / CCUG 24695 / JCM 21032 / LMG 3331 / NBRC 15819 / NCTC 12168 / Alc 37) (Ochrobactrum anthropi)).